The sequence spans 215 residues: Urease accessory protein UreG (215 aa).

The tract at residues 1–21 is disordered; it reads MNAPASSPARRTKKLPPLRVG. 24–31 serves as a coordination point for GTP; it reads GPVGSGKT.

It belongs to the SIMIBI class G3E GTPase family. UreG subfamily. In terms of assembly, homodimer. UreD, UreF and UreG form a complex that acts as a GTP-hydrolysis-dependent molecular chaperone, activating the urease apoprotein by helping to assemble the nickel containing metallocenter of UreC. The UreE protein probably delivers the nickel.

The protein resides in the cytoplasm. Facilitates the functional incorporation of the urease nickel metallocenter. This process requires GTP hydrolysis, probably effectuated by UreG. In Burkholderia vietnamiensis (strain G4 / LMG 22486) (Burkholderia cepacia (strain R1808)), this protein is Urease accessory protein UreG.